We begin with the raw amino-acid sequence, 347 residues long: Histidinol-phosphate aminotransferase (347 aa).

The residue at position 209 (K209) is an N6-(pyridoxal phosphate)lysine.

The protein belongs to the class-II pyridoxal-phosphate-dependent aminotransferase family. Histidinol-phosphate aminotransferase subfamily. Homodimer. Pyridoxal 5'-phosphate serves as cofactor.

The catalysed reaction is L-histidinol phosphate + 2-oxoglutarate = 3-(imidazol-4-yl)-2-oxopropyl phosphate + L-glutamate. It functions in the pathway amino-acid biosynthesis; L-histidine biosynthesis; L-histidine from 5-phospho-alpha-D-ribose 1-diphosphate: step 7/9. The sequence is that of Histidinol-phosphate aminotransferase from Geotalea daltonii (strain DSM 22248 / JCM 15807 / FRC-32) (Geobacter daltonii).